The following is a 505-amino-acid chain: Folate transporter 1 (505 aa).

The next 4 membrane-spanning stretches (helical) occupy residues 58-78 (SLIA…IYLL), 89-109 (LSIV…WAVI), 122-142 (YYLL…GLIT), and 146-166 (LFIT…CNVI). 3 N-linked (GlcNAc...) asparagine glycosylation sites follow: Asn-177, Asn-181, and Asn-186. Transmembrane regions (helical) follow at residues 192–212 (AFRK…LLLI) and 216–236 (HIFL…FFII). An N-linked (GlcNAc...) asparagine glycan is attached at Asn-240. 5 helical membrane passes run 266-286 (IIFI…FFYI), 300-320 (MAMF…LFFT), 326-346 (KLLL…LVVI), 352-372 (FLFI…EFIA), and 405-425 (FASI…NITS). Residue Asn-427 is glycosylated (N-linked (GlcNAc...) asparagine). A helical membrane pass occupies residues 431–451 (LPYMIIICCLTNIIPIFFLYI). An N-linked (GlcNAc...) asparagine glycan is attached at Asn-454.

Belongs to the major facilitator superfamily. Folate-biopterin transporter (TC 2.A.71) family.

Its subcellular location is the cell membrane. It carries out the reaction folate(in) + H(+)(in) = folate(out) + H(+)(out). Its activity is regulated as follows. Transport of folates is inhibited by probenecid and methotrexate. Folate transporter with broad substrate specificity. Transports folic acid, folinic acid, pteroic acid, dihydropteroic acid, the folate precursor p-amino benzoic acid (pABA) and the human folate catabolite pABA monoglutamate. This is Folate transporter 1 from Plasmodium falciparum (isolate 3D7).